The primary structure comprises 186 residues: Ribosome-recycling factor (186 aa).

The protein belongs to the RRF family.

It localises to the cytoplasm. Functionally, responsible for the release of ribosomes from messenger RNA at the termination of protein biosynthesis. May increase the efficiency of translation by recycling ribosomes from one round of translation to another. The chain is Ribosome-recycling factor from Cytophaga hutchinsonii (strain ATCC 33406 / DSM 1761 / CIP 103989 / NBRC 15051 / NCIMB 9469 / D465).